Reading from the N-terminus, the 357-residue chain is Nicotinate-nucleotide--dimethylbenzimidazole phosphoribosyltransferase (357 aa).

Catalysis depends on Glu-317, which acts as the Proton acceptor.

It belongs to the CobT family.

The enzyme catalyses 5,6-dimethylbenzimidazole + nicotinate beta-D-ribonucleotide = alpha-ribazole 5'-phosphate + nicotinate + H(+). The protein operates within nucleoside biosynthesis; alpha-ribazole biosynthesis; alpha-ribazole from 5,6-dimethylbenzimidazole: step 1/2. In terms of biological role, catalyzes the synthesis of alpha-ribazole-5'-phosphate from nicotinate mononucleotide (NAMN) and 5,6-dimethylbenzimidazole (DMB). This is Nicotinate-nucleotide--dimethylbenzimidazole phosphoribosyltransferase from Halalkalibacterium halodurans (strain ATCC BAA-125 / DSM 18197 / FERM 7344 / JCM 9153 / C-125) (Bacillus halodurans).